The chain runs to 112 residues: UPF0102 protein NIS_1551 (112 aa).

Belongs to the UPF0102 family.

This Nitratiruptor sp. (strain SB155-2) protein is UPF0102 protein NIS_1551.